The primary structure comprises 43 residues: Holotricin-1 (43 aa).

Intrachain disulfides connect C3–C34, C20–C39, and C24–C41.

This sequence belongs to the invertebrate defensin family. Type 1 subfamily. As to expression, hemolymph.

The protein localises to the secreted. Its function is as follows. Shows potent antibacterial activity against Gram-positive bacteria. This chain is Holotricin-1, found in Holotrichia diomphalia (Korean black chafer).